The primary structure comprises 350 residues: Galactokinase (350 aa).

Position 14–17 (14–17 (EHTD)) interacts with substrate. Residues serine 46 and 96–102 (GAGLSSS) contribute to the ATP site. 2 residues coordinate Mg(2+): serine 102 and glutamate 134. Catalysis depends on aspartate 146, which acts as the Proton acceptor. Tyrosine 196 is a binding site for substrate.

It belongs to the GHMP kinase family. GalK subfamily.

The protein localises to the cytoplasm. It catalyses the reaction alpha-D-galactose + ATP = alpha-D-galactose 1-phosphate + ADP + H(+). The protein operates within carbohydrate metabolism; galactose metabolism. Its function is as follows. Catalyzes the transfer of the gamma-phosphate of ATP to D-galactose to form alpha-D-galactose-1-phosphate (Gal-1-P). The protein is Galactokinase of Thermotoga neapolitana.